A 193-amino-acid polypeptide reads, in one-letter code: Xanthine phosphoribosyltransferase (193 aa).

Xanthine-binding residues include Leu-20 and Asn-27. Ala-128–Ala-132 is a 5-phospho-alpha-D-ribose 1-diphosphate binding site. Residue Lys-156 coordinates xanthine.

It belongs to the purine/pyrimidine phosphoribosyltransferase family. Xpt subfamily. In terms of assembly, homodimer.

It localises to the cytoplasm. It carries out the reaction XMP + diphosphate = xanthine + 5-phospho-alpha-D-ribose 1-diphosphate. The protein operates within purine metabolism; XMP biosynthesis via salvage pathway; XMP from xanthine: step 1/1. Converts the preformed base xanthine, a product of nucleic acid breakdown, to xanthosine 5'-monophosphate (XMP), so it can be reused for RNA or DNA synthesis. This Staphylococcus saprophyticus subsp. saprophyticus (strain ATCC 15305 / DSM 20229 / NCIMB 8711 / NCTC 7292 / S-41) protein is Xanthine phosphoribosyltransferase.